Here is a 137-residue protein sequence, read N- to C-terminus: Large ribosomal subunit protein uL16 (137 aa).

Belongs to the universal ribosomal protein uL16 family. In terms of assembly, part of the 50S ribosomal subunit.

Functionally, binds 23S rRNA and is also seen to make contacts with the A and possibly P site tRNAs. This chain is Large ribosomal subunit protein uL16, found in Rhizobium etli (strain CIAT 652).